The sequence spans 1201 residues: MAGHLVKYGKHRTRRSYARIKEVLDLPNLIEIQTDSYQWFLDEGLREMFEDIMPIDDFAGKLSLEFVDYQLLEPKYTVEEAREHDANYSAPLHVTLRLTNHETGEIKSQDVFFGDFPLMTEQGTFIINGAERVIVSQLVRSPGVYFNEELDKNGRPSYGTTVIPNRGAWLELETDAKNVSYVRIDRTRKIPLTELVRALGYGSDDDIIDMLGETDSLMLTLEKDVHKNTDDSRVEESLKDIYERLRPGEPKTADSSRSLLTARFFDPKRYDFAPVGRYKVNKKLSMKTRLMDQTLAETLADPDTGEVIAQKDTVIDKNVMAKLSPYLERDDFKTVTYTPSDEAVVTNPMVLQVVKVYSQNDPEKVVNVIGNGNIDLKFKHIVPADIIASINYFFNLQEGLGSTDDIDHLGNRRIRSVGELLQNQFRIGLSRMERVVRERMSIQDAATVTPQQLINIRPVVASIKEFFGSSQLSQFMDQTNPLGELTHKRRLSALGPGGLTRDRAGYEVRDVHYTHYGRMCPIETPEGPNIGLINSLSSYAKVNRSGFIETPYRRVDWTTHKVTDKIDYLAADEEDQFVIAQANSPLNDDGSFVEDTVLARNKEENLETPIENVDYMDVSPKQVVAVATACIPFLENDDSNRALMGANMQRQAVPLLDPHAPLIGTGIEYKAAHDSGIALICRHEGTVEYVDAREVRVRRDDGSLDTYKLMKFRRSNGGKNYNQRPIVKVGDHVDNDEVLADGPAMEGGELALGQNPLVAFMTWNGYNFEDAIIINERLVREDVYTSIHIEEYESEARDTKLGPEEMTREIPNVGEDALKNLDEDGIIRIGAEVKDGDILVGKVTPKGVTELSAEERLLHAIFGEKAREVRDTSLRVPHGGGGIIQDVKIFTRENGDELSPGVNMMVRVYIAQKRKIQVGDKMAGRHGNKGTVSIVVPEEDMPYMPDGTPIDIMLSPMGVPSRMNIGQVLELHLGMAARKLGIHMATPVFDGAQDTDIWEAIREAGVDSDAKSIVYDGRTGEPFDKRVAVGVMHYMKLSHMVDDKIHARSIGPYSLVTQQPLGGKAQFGGQRFGEMEVWALEAYGAAYTLQEILTYKSDDVVGRVKTYEAIVKGEPIPKPGVPESFRVLVKELQALGLDMKVLDSEDKEIELRDMDDDDDEVVNVDALSKFKQQQDEKAADKAAKADAAKPSETTNAQQDNQ.

A disordered region spans residues 1165 to 1201 (DALSKFKQQQDEKAADKAAKADAAKPSETTNAQQDNQ). Residues 1172 to 1189 (QQQDEKAADKAAKADAAK) are compositionally biased toward basic and acidic residues. Positions 1191–1201 (SETTNAQQDNQ) are enriched in polar residues.

It belongs to the RNA polymerase beta chain family. As to quaternary structure, the RNAP catalytic core consists of 2 alpha, 1 beta, 1 beta' and 1 omega subunit. When a sigma factor is associated with the core the holoenzyme is formed, which can initiate transcription.

It carries out the reaction RNA(n) + a ribonucleoside 5'-triphosphate = RNA(n+1) + diphosphate. In terms of biological role, DNA-dependent RNA polymerase catalyzes the transcription of DNA into RNA using the four ribonucleoside triphosphates as substrates. The protein is DNA-directed RNA polymerase subunit beta of Lactiplantibacillus plantarum (strain ATCC BAA-793 / NCIMB 8826 / WCFS1) (Lactobacillus plantarum).